Here is a 440-residue protein sequence, read N- to C-terminus: 23S rRNA (uracil(1939)-C(5))-methyltransferase RlmD (440 aa).

The TRAM domain maps to 10-68 (KSTQPQRIEFTVDSLDHHCVGIGRHQGKAIFIEGALPGELVKARILEDKKQYAHAALQQ). [4Fe-4S] cluster contacts are provided by cysteine 81, cysteine 87, cysteine 90, and cysteine 169. Residues glutamine 273, phenylalanine 302, asparagine 307, glutamate 323, aspartate 350, and aspartate 371 each coordinate S-adenosyl-L-methionine. The active-site Nucleophile is the cysteine 397.

This sequence belongs to the class I-like SAM-binding methyltransferase superfamily. RNA M5U methyltransferase family. RlmD subfamily.

It catalyses the reaction uridine(1939) in 23S rRNA + S-adenosyl-L-methionine = 5-methyluridine(1939) in 23S rRNA + S-adenosyl-L-homocysteine + H(+). Functionally, catalyzes the formation of 5-methyl-uridine at position 1939 (m5U1939) in 23S rRNA. The sequence is that of 23S rRNA (uracil(1939)-C(5))-methyltransferase RlmD from Aeromonas hydrophila subsp. hydrophila (strain ATCC 7966 / DSM 30187 / BCRC 13018 / CCUG 14551 / JCM 1027 / KCTC 2358 / NCIMB 9240 / NCTC 8049).